The chain runs to 158 residues: Transmembrane protein 50B (158 aa).

Ala-2 carries the post-translational modification N-acetylalanine. The next 4 helical transmembrane spans lie at 28-48 (VVAGILFFTGWWIMIDAAVVY), 56-76 (HAFHTCGVFSTLAFFMINAVS), 98-118 (WLFIGFMLMFGSLIASMWILF), and 128-148 (VYPGLAVFFQNALIFFSTLIY).

It belongs to the UPF0220 family. As to quaternary structure, may form homotrimers or homodimers.

It localises to the endoplasmic reticulum membrane. The protein localises to the golgi apparatus membrane. The protein is Transmembrane protein 50B (TMEM50B) of Bos taurus (Bovine).